The following is a 276-amino-acid chain: ATP synthase subunit a (276 aa).

6 helical membrane-spanning segments follow: residues 27–47 (ITMLAGLSVLNLFPLAALEVG), 61–81 (GQTFATSWFVILLLVIASLAA), 120–140 (LPFIGTLFLFIFVSNWSGALL), 159–179 (DINTTVALALLTSLAYFYAGL), 225–245 (LVVAVLVLLVPLLVPLPLMAL), and 246–266 (GLFTSAIQALVFATLAGAYIH).

The protein belongs to the ATPase A chain family. F-type ATPases have 2 components, CF(1) - the catalytic core - and CF(0) - the membrane proton channel. CF(1) has five subunits: alpha(3), beta(3), gamma(1), delta(1), epsilon(1). CF(0) has four main subunits: a, b, b' and c.

The protein resides in the cellular thylakoid membrane. Functionally, key component of the proton channel; it plays a direct role in the translocation of protons across the membrane. The protein is ATP synthase subunit a of Synechocystis sp. (strain ATCC 27184 / PCC 6803 / Kazusa).